Consider the following 456-residue polypeptide: Glycerol-3-phosphate acyltransferase 4 (456 aa).

Residues 1 to 37 (MFLLLPFDSLIVNLLGISLTVLFTLLLVFIIVPAIFG) form the signal peptide. Transmembrane regions (helical) follow at residues 156 to 176 (ISLRLTILWGLGVLIRYCFLL) and 180 to 200 (IALAFTGIGLLVVGTTMVGYL). Asn247 carries N-linked (GlcNAc...) asparagine glycosylation. The short motif at 248-253 (HTSPID) is the HXXXXD motif element. N-linked (GlcNAc...) asparagine glycosylation is found at Asn327, Asn328, and Asn362.

It belongs to the 1-acyl-sn-glycerol-3-phosphate acyltransferase family. Highly expressed in testis.

It is found in the endoplasmic reticulum membrane. It carries out the reaction sn-glycerol 3-phosphate + an acyl-CoA = a 1-acyl-sn-glycero-3-phosphate + CoA. It catalyses the reaction dodecanoyl-CoA + sn-glycerol 3-phosphate = 1-dodecanoyl-sn-glycerol 3-phosphate + CoA. The catalysed reaction is sn-glycerol 3-phosphate + hexadecanoyl-CoA = 1-hexadecanoyl-sn-glycero-3-phosphate + CoA. The enzyme catalyses sn-glycerol 3-phosphate + octadecanoyl-CoA = 1-octadecanoyl-sn-glycero-3-phosphate + CoA. It carries out the reaction sn-glycerol 3-phosphate + (9Z)-octadecenoyl-CoA = 1-(9Z-octadecenoyl)-sn-glycero-3-phosphate + CoA. It catalyses the reaction (9Z,12Z)-octadecadienoyl-CoA + sn-glycerol 3-phosphate = 1-(9Z,12Z)-octadecadienoyl-sn-glycero-3-phosphate + CoA. It participates in phospholipid metabolism; CDP-diacylglycerol biosynthesis; CDP-diacylglycerol from sn-glycerol 3-phosphate: step 1/3. Functionally, converts glycerol-3-phosphate to 1-acyl-sn-glycerol-3-phosphate (lysophosphatidic acid or LPA) by incorporating an acyl moiety at the sn-1 position of the glycerol backbone. Active against both saturated and unsaturated long-chain fatty acyl-CoAs. Protects cells against lipotoxicity. This is Glycerol-3-phosphate acyltransferase 4 from Mus musculus (Mouse).